We begin with the raw amino-acid sequence, 173 residues long: Photosystem I assembly protein Ycf3 (173 aa).

TPR repeat units follow at residues 35 to 68 (AFVY…EEDP), 72 to 105 (SYIL…NPRM), and 120 to 153 (GEKA…APNN).

The protein belongs to the Ycf3 family.

It localises to the cellular thylakoid membrane. Functionally, essential for the assembly of the photosystem I (PSI) complex. May act as a chaperone-like factor to guide the assembly of the PSI subunits. This Rippkaea orientalis (strain PCC 8801 / RF-1) (Cyanothece sp. (strain PCC 8801)) protein is Photosystem I assembly protein Ycf3.